The primary structure comprises 239 residues: Succinate dehydrogenase [ubiquinone] iron-sulfur subunit (239 aa).

Residues 11-100 (FKVYRWNPDK…EMKIYPLPHM (90 aa)) form the 2Fe-2S ferredoxin-type domain. Cys61, Cys66, Cys69, and Cys81 together coordinate [2Fe-2S] cluster. Positions 141–171 (DREKLDGLYECVLCACCSTSCPSYWWNSDKY) constitute a 4Fe-4S ferredoxin-type domain. 3 residues coordinate [4Fe-4S] cluster: Cys151, Cys154, and Cys157. Position 161 (Cys161) interacts with [3Fe-4S] cluster. Trp166 contacts a ubiquinone. 2 residues coordinate [3Fe-4S] cluster: Cys208 and Cys214. Cys218 is a [4Fe-4S] cluster binding site.

It belongs to the succinate dehydrogenase/fumarate reductase iron-sulfur protein family. In terms of assembly, component of complex II composed of four subunits: a flavoprotein (FP), an iron-sulfur protein (IP), and a cytochrome b composed of a large and a small subunit. It depends on [2Fe-2S] cluster as a cofactor. Requires [3Fe-4S] cluster as cofactor. [4Fe-4S] cluster is required as a cofactor.

The protein localises to the mitochondrion inner membrane. The enzyme catalyses a quinone + succinate = fumarate + a quinol. It participates in carbohydrate metabolism; tricarboxylic acid cycle; fumarate from succinate (eukaryal route): step 1/1. Iron-sulfur protein (IP) subunit of succinate dehydrogenase (SDH) that is involved in complex II of the mitochondrial electron transport chain and is responsible for transferring electrons from succinate to ubiquinone (coenzyme Q). This chain is Succinate dehydrogenase [ubiquinone] iron-sulfur subunit (SDH2), found in Reclinomonas americana.